The primary structure comprises 279 residues: Stathmin domain-containing protein 1 (279 aa).

Disordered stretches follow at residues 1–110 (MGCG…ERPK) and 178–254 (AAEE…VAQM). Gly2 carries N-myristoyl glycine lipidation. A compositionally biased stretch (basic and acidic residues) spans 22–32 (KGWEEGSKADV). Polar residues predominate over residues 34 to 45 (VTSSKENCSPQT). One can recognise an SLD domain in the interval 121 to 248 (QGIIQSRSKV…GEPLKRKKSE (128 aa)). 2 stretches are compositionally biased toward basic and acidic residues: residues 178–191 (AAEE…EEIR) and 232–242 (EKSDVQEGEPL).

This is Stathmin domain-containing protein 1 (Stmnd1) from Mus musculus (Mouse).